A 95-amino-acid polypeptide reads, in one-letter code: Integration host factor subunit beta (95 aa).

It belongs to the bacterial histone-like protein family. As to quaternary structure, heterodimer of an alpha and a beta chain.

Functionally, this protein is one of the two subunits of integration host factor, a specific DNA-binding protein that functions in genetic recombination as well as in transcriptional and translational control. The sequence is that of Integration host factor subunit beta from Klebsiella pneumoniae (strain 342).